We begin with the raw amino-acid sequence, 543 residues long: Excitatory amino acid transporter 1 (543 aa).

Topologically, residues 1–47 (MTKSNGEEPRMGGRMERLQQGVRKRTLLAKKKVQSLTKEDVKSYLFR) are cytoplasmic. Residues 48-68 (NAFVLLTVTAVIVGTILGFAL) form a helical membrane-spanning segment. Over 69–86 (RPYKMSYREVKYFSFPGE) the chain is Extracellular. Residues 87–108 (LLMRMLQMLVLPLIISSLVTGM) form a helical membrane-spanning segment. At 109-122 (AALDSKASGKMGMR) the chain is on the cytoplasmic side. A helical membrane pass occupies residues 123–145 (AVVYYMTTTIIAVVIGIIIVIII). At 146-236 (HPGKGTKENM…IREEMVPVPG (91 aa)) the chain is on the extracellular side. 2 N-linked (GlcNAc...) asparagine glycosylation sites follow: N206 and N216. A helical transmembrane segment spans residues 237-260 (SVNGVNALGLVVFSMCFGFVIGNM). Topologically, residues 261 to 269 (KEQGQALRE) are cytoplasmic. A helical membrane pass occupies residues 270–297 (FFDSLNEAIMRLVAVIMWYAPLGILFLI). Topologically, residues 298–318 (AGKIVEMEDMGVIGGQLAMYT) are extracellular. The chain crosses the membrane as a helical span at residues 319-340 (VTVIVGLLIHAVIVLPLLYFLV). At 341–345 (TRKNP) the chain is on the cytoplasmic side. An intramembrane region (discontinuously helical) is located at residues 346 to 376 (WVFIGGLLQALITALGTSSSSATLPITFKCL). 363–365 (SSS) is an L-aspartate binding site. At 377 to 385 (EENNGVDKR) the chain is on the cytoplasmic side. The helical transmembrane segment at 386–412 (ITRFVLPVGATINMDGTALYEALAAIF) threads the bilayer. G394, T396, and N398 together coordinate Na(+). L-aspartate is bound at residue T402. The Extracellular segment spans residues 413-425 (IAQVNNFDLNFGQ). Residues 426-459 (IITISITATAASIGAAGIPQAGLVTMVIVLTSVG) constitute an intramembrane region (discontinuously helical). L-aspartate is bound at residue 443-447 (IPQAG). Residues 460 to 472 (LPTDDITLIIAVD) lie on the Extracellular side of the membrane. Residues 473–494 (WFLDRLRTTTNVLGDSLGAGIV) traverse the membrane as a helical segment. 2 residues coordinate L-aspartate: D476 and N483. Na(+) contacts are provided by N483 and D487. Residues 495 to 543 (EHLSRHELKNRDVEMGNSVIEENEMKKPYQLIAQDNEPEKPVADSETKM) are Cytoplasmic-facing. S512 carries the phosphoserine modification. The disordered stretch occupies residues 522–543 (PYQLIAQDNEPEKPVADSETKM). The segment covering 531–543 (EPEKPVADSETKM) has biased composition (basic and acidic residues).

It belongs to the dicarboxylate/amino acid:cation symporter (DAACS) (TC 2.A.23) family. SLC1A3 subfamily. In terms of assembly, homotrimer. Post-translationally, glycosylated. Detected in brain, in Bergmann glia arborising into the molecular layer of the cerebellum (at protein level). Localized in brain and is highly enriched in the Purkinje cell layer in cerebellum. Intermediate level in lung, low level in spleen, skeletal muscle and testis.

The protein localises to the cell membrane. It carries out the reaction K(+)(in) + L-glutamate(out) + 3 Na(+)(out) + H(+)(out) = K(+)(out) + L-glutamate(in) + 3 Na(+)(in) + H(+)(in). The catalysed reaction is K(+)(in) + L-aspartate(out) + 3 Na(+)(out) + H(+)(out) = K(+)(out) + L-aspartate(in) + 3 Na(+)(in) + H(+)(in). It catalyses the reaction D-aspartate(out) + K(+)(in) + 3 Na(+)(out) + H(+)(out) = D-aspartate(in) + K(+)(out) + 3 Na(+)(in) + H(+)(in). Sodium-dependent, high-affinity amino acid transporter that mediates the uptake of L-glutamate and also L-aspartate and D-aspartate. Functions as a symporter that transports one amino acid molecule together with two or three Na(+) ions and one proton, in parallel with the counter-transport of one K(+) ion. Plays a redundant role in the rapid removal of released glutamate from the synaptic cleft, which is essential for terminating the postsynaptic action of glutamate. The protein is Excitatory amino acid transporter 1 (Slc1a3) of Mus musculus (Mouse).